We begin with the raw amino-acid sequence, 99 residues long: Small ribosomal subunit protein bS20 (99 aa).

Belongs to the bacterial ribosomal protein bS20 family.

Functionally, binds directly to 16S ribosomal RNA. The sequence is that of Small ribosomal subunit protein bS20 from Thermomicrobium roseum (strain ATCC 27502 / DSM 5159 / P-2).